Reading from the N-terminus, the 259-residue chain is MNAASLTGITALSIGKDIKLNSAEELEAALRHIGATRYHSLHPFHKLLHGGKLNKGQVQAWALNRYYYQSTIPIKDAVVISRFRDRATRLEWRHRIEDHDGDVGSEGGIERWLKLTEGLGLDTAYVESTEGILPATRFAVEAYVHYCREKSPLEAIASSLTELFAPSIHEERIAGMLQHYDFVNPDIMSYFKRRLTQAPRDANFALEYVRTHARTPEERASVCNALIFKTNVLWVQLDALQHAYVEGHIPPGAFVPKEN.

The protein belongs to the PqqC family.

It catalyses the reaction 6-(2-amino-2-carboxyethyl)-7,8-dioxo-1,2,3,4,7,8-hexahydroquinoline-2,4-dicarboxylate + 3 O2 = pyrroloquinoline quinone + 2 H2O2 + 2 H2O + H(+). It functions in the pathway cofactor biosynthesis; pyrroloquinoline quinone biosynthesis. In terms of biological role, ring cyclization and eight-electron oxidation of 3a-(2-amino-2-carboxyethyl)-4,5-dioxo-4,5,6,7,8,9-hexahydroquinoline-7,9-dicarboxylic-acid to PQQ. The protein is Pyrroloquinoline-quinone synthase of Bradyrhizobium diazoefficiens (strain JCM 10833 / BCRC 13528 / IAM 13628 / NBRC 14792 / USDA 110).